The chain runs to 183 residues: Ribulose bisphosphate carboxylase small subunit, chloroplastic 3 (183 aa).

The N-terminal 43 residues, 1-43 (MATTMLNRSVIVNKEVAKTPNFPRATKNNKGFASNAAVQKCRD), are a transit peptide targeting the chloroplast.

It belongs to the RuBisCO small chain family. In terms of assembly, heterohexadecamer of 8 large and 8 small subunits.

The protein resides in the plastid. It localises to the chloroplast. RuBisCO catalyzes two reactions: the carboxylation of D-ribulose 1,5-bisphosphate, the primary event in carbon dioxide fixation, as well as the oxidative fragmentation of the pentose substrate. Both reactions occur simultaneously and in competition at the same active site. Although the small subunit is not catalytic it is essential for maximal activity. The protein is Ribulose bisphosphate carboxylase small subunit, chloroplastic 3 of Acetabularia peniculus (Green alga).